Consider the following 32-residue polypeptide: MSDIN-like toxin proprotein 11 (32 aa).

Residues 1–10 (MSDINATRLP) constitute a propeptide that is removed on maturation. The segment at 1–32 (MSDINATRLPGMEPPSPMPCVGDADNFTLTRG) is disordered. The cyclopeptide (Gly-Pro) cross-link spans 11–19 (GMEPPSPMP). A propeptide spanning residues 20 to 32 (CVGDADNFTLTRG) is cleaved from the precursor.

The protein belongs to the MSDIN fungal toxin family. Post-translationally, processed by the macrocyclase-peptidase enzyme POPB to yield a toxic cyclic nonapeptide. POPB first removes 10 residues from the N-terminus. Conformational trapping of the remaining peptide forces the enzyme to release this intermediate rather than proceed to macrocyclization. The enzyme rebinds the remaining peptide in a different conformation and catalyzes macrocyclization of the N-terminal 9 residues.

Probable toxin that belongs to the MSDIN-like toxin family responsible for a large number of food poisoning cases and deaths. The protein is MSDIN-like toxin proprotein 11 of Amanita bisporigera (Destroying angel).